Here is a 175-residue protein sequence, read N- to C-terminus: Large ribosomal subunit protein uL5 (175 aa).

Belongs to the universal ribosomal protein uL5 family. As to quaternary structure, part of the 50S ribosomal subunit; contacts the 5S rRNA and probably tRNA. Forms a bridge to the 30S subunit in the 70S ribosome.

In terms of biological role, this is one of the proteins that bind and probably mediate the attachment of the 5S RNA into the large ribosomal subunit, where it forms part of the central protuberance. In the 70S ribosome it contacts protein S13 of the 30S subunit (bridge B1b), connecting the 2 subunits; this bridge is implicated in subunit movement. May contact the P site tRNA; the 5S rRNA and some of its associated proteins might help stabilize positioning of ribosome-bound tRNAs. This is Large ribosomal subunit protein uL5 from Halobacterium salinarum (strain ATCC 29341 / DSM 671 / R1).